We begin with the raw amino-acid sequence, 1028 residues long: MRKKVDERIRTLIENGVKLRHRSMFVIIGDKSRDQIVNLHHMLSKAVIKCNPSVLWCYKDKLDISSHKQKRSKQLKRLRERGQLDPEKLDAFSRLLDVGRVTHCLYKDSERILGNTFGMCILQDFEALTPNLLARTIETVEGGGLVVLILRSLTSLTSLCTMVMDVHDRFRTESHSEAAGRFNERFLLSLASCKACVVMDDELNILPLSSHIRSITQVPTEKDSEGLSEAERDLKSLKEDLSDDFPVGPLIKKCCTLDQGKAVVTFFDAILDKALRSIVALIASRGRGKSAALGLAVAGAVAAGYSNIYITAPSPDNLKTFFEFVCKGFDALEYKEHLDYDVVKSANPDFKKAVVRINIFKQHRQTIQYIQPHEHEKLSQVELLVIDEAAAIPLPVVKSLLGPYLVFLSSTVSGYEGTGRSLSLKLLQQLDEQSRAPATGLEGSGCLFKKIELTESIRYGSGDPIESWLNGLLCLDVATCLPNPACHPSPSQCDLYYVNRDTLFSYHKDSELFLQRMMALCVSSHYKNSPNDLQLLADAPAHHLFVLLGPVDESQNKIPDILCVIQVCLEGKISENSALQSLRDGHSPYGDQIPWKFCEQFRDTEFPGFSGARIVRIAVHPNAMKMGYGSAAVELLTRYFEGQIAPISEAEDKVDVEHAPIKVTEAAEKVSMLEEQVKPRTNLPPLLVPLHDRRPEKLHYIGVSFGLTLDLFRFWRKHNFAPFYVSQIPSAVTGEHTCMLLKPLKNDELEVNESDELGFFTPFYKDFKIRFSKLLSDKFKKMDYKLAMSVLNPKINFAEVDSSGSSSGGFLKTLNGILSPYDMERLRAYTENLTDFNLVYDICKTLAHQYFEEKLPVSLSYVQASILLCLGLQETDFSSIERQMQLERGQIHSLLLKVARELYKYLNGVAGKEIKSALPRLKERELTAHNVSVDDDIREGAKQVEEQMKKEKIEGLMDSELQQYVIGDKEAEALQHSKISSSGIISVKSTKSENENGFDKSTKKRSSDKRSSSSSKSKSSKKRKSLKE.

ATP-binding positions include 286 to 295 and arginine 458; that span reads GRGKSAALGL. One can recognise an N-acetyltransferase domain in the interval 546-729; sequence VLLGPVDESQ…FAPFYVSQIP (184 aa). Acetyl-CoA is bound by residues 617-619, 624-630, and lysine 717; these read IAV and MKMGYGS. Residues 982–1028 are disordered; the sequence is SGIISVKSTKSENENGFDKSTKKRSSDKRSSSSSKSKSSKKRKSLKE. Over residues 990–1001 the composition is skewed to basic and acidic residues; that stretch reads TKSENENGFDKS. Residues 1018 to 1028 show a composition bias toward basic residues; sequence KSSKKRKSLKE.

The protein belongs to the RNA cytidine acetyltransferase family. NAT10 subfamily.

It is found in the nucleus. The protein resides in the nucleolus. The enzyme catalyses a cytidine in 18S rRNA + acetyl-CoA + ATP + H2O = an N(4)-acetylcytidine in 18S rRNA + ADP + phosphate + CoA + H(+). The catalysed reaction is a cytidine in tRNA + acetyl-CoA + ATP + H2O = an N(4)-acetylcytidine in tRNA + ADP + phosphate + CoA + H(+). In terms of biological role, RNA cytidine acetyltransferase with specificity toward both 18S rRNA and tRNAs. Catalyzes the formation of N(4)-acetylcytidine (ac4C) in 18S rRNA. Required for early nucleolar cleavages of precursor rRNA at sites A0, A1 and A2 during 18S rRNA synthesis. Catalyzes the formation of ac4C in serine and leucine tRNAs. Requires a tRNA-binding adapter protein for full tRNA acetyltransferase activity but not for 18S rRNA acetylation. The sequence is that of RNA cytidine acetyltransferase 2 from Arabidopsis thaliana (Mouse-ear cress).